Here is a 200-residue protein sequence, read N- to C-terminus: NAD(P)H-quinone oxidoreductase subunit 6, chloroplastic (200 aa).

5 consecutive transmembrane segments (helical) span residues valine 13 to threonine 33, isoleucine 35 to leucine 55, alanine 64 to isoleucine 84, threonine 101 to isoleucine 121, and leucine 156 to isoleucine 176.

Belongs to the complex I subunit 6 family. In terms of assembly, NDH is composed of at least 16 different subunits, 5 of which are encoded in the nucleus.

It is found in the plastid. The protein resides in the chloroplast thylakoid membrane. It catalyses the reaction a plastoquinone + NADH + (n+1) H(+)(in) = a plastoquinol + NAD(+) + n H(+)(out). The catalysed reaction is a plastoquinone + NADPH + (n+1) H(+)(in) = a plastoquinol + NADP(+) + n H(+)(out). NDH shuttles electrons from NAD(P)H:plastoquinone, via FMN and iron-sulfur (Fe-S) centers, to quinones in the photosynthetic chain and possibly in a chloroplast respiratory chain. The immediate electron acceptor for the enzyme in this species is believed to be plastoquinone. Couples the redox reaction to proton translocation, and thus conserves the redox energy in a proton gradient. This is NAD(P)H-quinone oxidoreductase subunit 6, chloroplastic (ndhG) from Anthoceros angustus (Hornwort).